The sequence spans 448 residues: Asparagine--tRNA ligase (448 aa).

This sequence belongs to the class-II aminoacyl-tRNA synthetase family. As to quaternary structure, homodimer.

It is found in the cytoplasm. The enzyme catalyses tRNA(Asn) + L-asparagine + ATP = L-asparaginyl-tRNA(Asn) + AMP + diphosphate + H(+). The polypeptide is Asparagine--tRNA ligase (Streptococcus pyogenes serotype M12 (strain MGAS9429)).